Reading from the N-terminus, the 423-residue chain is UDP-N-acetylglucosamine 1-carboxyvinyltransferase (423 aa).

21–22 (KN) is a phosphoenolpyruvate binding site. Arg92 is a binding site for UDP-N-acetyl-alpha-D-glucosamine. The Proton donor role is filled by Cys116. Cys116 bears the 2-(S-cysteinyl)pyruvic acid O-phosphothioketal mark. UDP-N-acetyl-alpha-D-glucosamine is bound by residues Asp305 and Val327.

The protein belongs to the EPSP synthase family. MurA subfamily.

It localises to the cytoplasm. The catalysed reaction is phosphoenolpyruvate + UDP-N-acetyl-alpha-D-glucosamine = UDP-N-acetyl-3-O-(1-carboxyvinyl)-alpha-D-glucosamine + phosphate. Its pathway is cell wall biogenesis; peptidoglycan biosynthesis. In terms of biological role, cell wall formation. Adds enolpyruvyl to UDP-N-acetylglucosamine. This is UDP-N-acetylglucosamine 1-carboxyvinyltransferase from Fervidobacterium nodosum (strain ATCC 35602 / DSM 5306 / Rt17-B1).